We begin with the raw amino-acid sequence, 874 residues long: Cellulose synthase catalytic subunit [UDP-forming] (874 aa).

4 helical membrane passes run 30–50 (SPFS…VFPL), 151–171 (ILGV…TQPF), 173–193 (PLSQ…VRRM), and 230–250 (LVCG…LVLG). The tract at residues 271-364 (QWPTVDIFVP…FVAIFDCDHV (94 aa)) is catalytic subdomain A. D313 is an active-site residue. Residues D360 and D362 each contribute to the substrate site. Positions 441–501 (KPLDEIGGIA…GQRIRWARGM (61 aa)) are catalytic subdomain B. D457 is an active-site residue. 5 helical membrane-spanning segments follow: residues 525 to 545 (LNAM…TAPL), 547 to 567 (FLLL…LFVI), 592 to 612 (IYET…LINP), 634 to 654 (VISR…AAGV), and 668 to 688 (VIVS…AVAV). A PilZ domain is found at 694–790 (QVRRAHRVEI…QHIDFVQCTF (97 aa)). Residues 833 to 853 (SVKVIFRSLTALIAWIVSFIP) form a helical membrane-spanning segment.

It belongs to the glycosyltransferase 2 family. Mg(2+) serves as cofactor.

It is found in the cell inner membrane. It catalyses the reaction [(1-&gt;4)-beta-D-glucosyl](n) + UDP-alpha-D-glucose = [(1-&gt;4)-beta-D-glucosyl](n+1) + UDP + H(+). It functions in the pathway glycan metabolism; bacterial cellulose biosynthesis. Activated by bis-(3'-5') cyclic diguanylic acid (c-di-GMP). In terms of biological role, catalytic subunit of cellulose synthase. It polymerizes uridine 5'-diphosphate glucose to cellulose, which is produced as an extracellular component for mechanical and chemical protection at the onset of the stationary phase, when the cells exhibit multicellular behavior (rdar morphotype). Coexpression of cellulose and thin aggregative fimbriae leads to a hydrophobic network with tightly packed cells embedded in a highly inert matrix. The protein is Cellulose synthase catalytic subunit [UDP-forming] (bcsA) of Salmonella typhimurium (strain LT2 / SGSC1412 / ATCC 700720).